Consider the following 153-residue polypeptide: NADH dehydrogenase [ubiquinone] 1 beta subcomplex subunit 11, mitochondrial (153 aa).

The N-terminal 29 residues, 1 to 29 (MAAGLFGLSARRLLAAAATRGLPAARVRW), are a transit peptide targeting the mitochondrion. Residues 40 to 76 (PSAVAGKRPPEPTTPWQEDPEPEDENLYEKNPDSHGY) are disordered. The segment covering 66–76 (LYEKNPDSHGY) has biased composition (basic and acidic residues). Residues 89 to 109 (LVFFFGVSIILVLGSTFVAYL) form a helical membrane-spanning segment.

It belongs to the complex I NDUFB11 subunit family. As to quaternary structure, complex I is composed of 45 different subunits. Interacts with BCAP31. Ubiquitous.

The protein resides in the mitochondrion inner membrane. Its function is as follows. Accessory subunit of the mitochondrial membrane respiratory chain NADH dehydrogenase (Complex I), that is believed not to be involved in catalysis. Complex I functions in the transfer of electrons from NADH to the respiratory chain. The immediate electron acceptor for the enzyme is believed to be ubiquinone. The polypeptide is NADH dehydrogenase [ubiquinone] 1 beta subcomplex subunit 11, mitochondrial (NDUFB11) (Homo sapiens (Human)).